Here is a 335-residue protein sequence, read N- to C-terminus: MQIGAATEGVEADLSVNAEPDVKPIAKMLSACVGSVITTLTVTPLDVVKTRLQSESISQYSSTQPISSAKILGKGRPAPKPLGGPVSGLYQIARHEGVRSLWRGLVPSLTMLLPANTVQFLGYEQLLPLYSDWGFPAAAAIAGASARTISATIVSPIELFRTRVQAVGGHYPPGHAREIANEVFDGLKLMIHQKGILNLWSGVSVTLWRDVPFSAFYWWSYERIRLFLLGHPSLQAFSSSQSTKDLYINFVSGGISGTLATLLTQPFDVSKTAKQVHGHTLTRGQFMLTLWKRGGPKALWKGTLPRCVKVAPSCAIMISSYHLTKKYFSESVDAY.

Solcar repeat units follow at residues 22-129 (VKPI…LLPL), 134-227 (GFPA…IRLF), and 244-327 (KDLY…TKKY). The next 6 helical transmembrane spans lie at 28 to 48 (MLSA…LDVV), 104 to 123 (GLVP…FLGY), 133 to 154 (WGFP…ATIV), 195 to 219 (GILN…FYWW), 246 to 263 (LYIN…ATLL), and 307 to 323 (CVKV…SYHL).

It belongs to the mitochondrial carrier (TC 2.A.29) family.

It is found in the mitochondrion inner membrane. This is an uncharacterized protein from Schizosaccharomyces pombe (strain 972 / ATCC 24843) (Fission yeast).